Here is a 374-residue protein sequence, read N- to C-terminus: Heat stress transcription factor A-8 (374 aa).

Residues 17–112 (VAPFLRKCYD…LLKNVIRRKN (96 aa)) mediate DNA binding. Residues 126–192 (TTYAQEKSGL…EMLSFLVMVM (67 aa)) are hydrophobic repeat HR-A/B. The AHA1 signature appears at 285–294 (DGAWEKLLLL). A Nuclear localization signal motif is present at residues 298–303 (RKKTKK). Positions 330-339 (KSYMLKLISE) match the AHA2 motif. Residues 363 to 370 (LTEQMELL) carry the Nuclear export signal motif.

Belongs to the HSF family. Class A subfamily. In terms of assembly, homotrimer. Exhibits temperature-dependent phosphorylation.

It is found in the cytoplasm. It localises to the nucleus. In terms of biological role, transcriptional activator that specifically binds DNA sequence 5'-AGAAnnTTCT-3' known as heat shock promoter elements (HSE). This Arabidopsis thaliana (Mouse-ear cress) protein is Heat stress transcription factor A-8 (HSFA8).